The primary structure comprises 395 residues: Elongation factor Tu (395 aa).

One can recognise a tr-type G domain in the interval 10–204 (KPHLNIGTIG…AVDNWIEEPV (195 aa)). The interval 19–26 (GHVDHGKT) is G1. 19–26 (GHVDHGKT) is a GTP binding site. Thr-26 lines the Mg(2+) pocket. Residues 60-64 (GITIN) are G2. The segment at 81–84 (DCPG) is G3. GTP-binding positions include 81–85 (DCPGH) and 136–139 (NKVD). The tract at residues 136-139 (NKVD) is G4. A G5 region spans residues 174-176 (SAL).

Belongs to the TRAFAC class translation factor GTPase superfamily. Classic translation factor GTPase family. EF-Tu/EF-1A subfamily. Monomer.

The protein resides in the cytoplasm. It catalyses the reaction GTP + H2O = GDP + phosphate + H(+). Functionally, GTP hydrolase that promotes the GTP-dependent binding of aminoacyl-tRNA to the A-site of ribosomes during protein biosynthesis. The protein is Elongation factor Tu of Flavobacterium johnsoniae (strain ATCC 17061 / DSM 2064 / JCM 8514 / BCRC 14874 / CCUG 350202 / NBRC 14942 / NCIMB 11054 / UW101) (Cytophaga johnsonae).